We begin with the raw amino-acid sequence, 304 residues long: tRNA pseudouridine synthase A (304 aa).

The Nucleophile role is filled by Asp65. A substrate-binding site is contributed by Tyr123. The interval 274–304 (HTGQEKPEARLGNGDLESREERPPHEMSPLH) is disordered. The span at 289–298 (LESREERPPH) shows a compositional bias: basic and acidic residues.

Belongs to the tRNA pseudouridine synthase TruA family. In terms of assembly, homodimer.

The enzyme catalyses uridine(38/39/40) in tRNA = pseudouridine(38/39/40) in tRNA. Its function is as follows. Formation of pseudouridine at positions 38, 39 and 40 in the anticodon stem and loop of transfer RNAs. The protein is tRNA pseudouridine synthase A of Gloeobacter violaceus (strain ATCC 29082 / PCC 7421).